The primary structure comprises 399 residues: MYHLYSHNDLDGVGCGIVAKLAFGKDVEIRYNSVNGLNAQVQYFLEKAKESNRQDALFITDLAVNEENEERLNEYVHAGGKVKLIDHHKTALHLNEHEWGFVQVEYDDGRLTSATSLLYGYLIENGFMKPTNALDQFTELVRQYDTWEWERYDQKQAKRLNDLFFLLSIDEFEAKMIQRLSTHDEFFFDDFEEKLLDLEDEKIERYLRRKKREMVQTFVHEHCVGIVHAESYHSELGNRLGKDNPHLDYIAILSMGSKRVSLRTIHDYIDVSEIAGRYGGGGHAKASGCSITDEVYELFVAEAFRIDPVRPDAFRNIYNLKGSANGSLYENRAQMRFFLFPLDNEWNIQINGETQDETFAAFEEAEWFIKRNYAASLVRDEVFVAFLAENLKLANQHRK.

It depends on Mn(2+) as a cofactor. Co(2+) is required as a cofactor. The cofactor is Mg(2+).

The protein localises to the cytoplasm. Degrades RNA oligonucleotides with a length of 5 nucleotides in a 3'- to 5'-direction. Less active on shorter RNA oligonucleotides and on those with a length of 24 nucleotides. Prefers RNA oligonucleotides containing adenines rather than cytosines. The chain is Oligoribonuclease NrnB (nrnB) from Bacillus subtilis (strain 168).